The primary structure comprises 379 residues: UPF0754 membrane protein ABC1518 (379 aa).

2 consecutive transmembrane segments (helical) span residues Met-1–Thr-21 and Leu-358–Phe-378.

Belongs to the UPF0754 family.

The protein localises to the cell membrane. The chain is UPF0754 membrane protein ABC1518 from Shouchella clausii (strain KSM-K16) (Alkalihalobacillus clausii).